Here is a 283-residue protein sequence, read N- to C-terminus: Diaminopimelate epimerase (283 aa).

Substrate contacts are provided by Asn13, Gln45, and Asn65. Cys74 acts as the Proton donor in catalysis. Residues 75–76 (GN), Asn156, Asn190, and 208–209 (ER) contribute to the substrate site. Catalysis depends on Cys217, which acts as the Proton acceptor. 218–219 (GS) is a binding site for substrate.

Belongs to the diaminopimelate epimerase family. Homodimer.

The protein resides in the cytoplasm. It carries out the reaction (2S,6S)-2,6-diaminopimelate = meso-2,6-diaminopimelate. The protein operates within amino-acid biosynthesis; L-lysine biosynthesis via DAP pathway; DL-2,6-diaminopimelate from LL-2,6-diaminopimelate: step 1/1. Catalyzes the stereoinversion of LL-2,6-diaminopimelate (L,L-DAP) to meso-diaminopimelate (meso-DAP), a precursor of L-lysine and an essential component of the bacterial peptidoglycan. This chain is Diaminopimelate epimerase, found in Bartonella henselae (strain ATCC 49882 / DSM 28221 / CCUG 30454 / Houston 1) (Rochalimaea henselae).